Here is a 251-residue protein sequence, read N- to C-terminus: Putative glutathione-independent glyoxalase hsp3105 (251 aa).

Belongs to the peptidase C56 family. HSP31-like subfamily.

The protein localises to the cytoplasm. The protein resides in the nucleus. The catalysed reaction is methylglyoxal + H2O = (R)-lactate + H(+). Its function is as follows. May catalyze the conversion of methylglyoxal (MG) to D-lactate in a single glutathione (GSH)-independent step. May play a role in detoxifying endogenously produced glyoxals. Involved in protection against reactive oxygen species (ROS). The polypeptide is Putative glutathione-independent glyoxalase hsp3105 (Schizosaccharomyces pombe (strain 972 / ATCC 24843) (Fission yeast)).